A 234-amino-acid chain; its full sequence is Elongation factor Tu, chloroplastic (234 aa).

A tr-type G domain is found at 1–125 (KNMITGAAQM…KVDSYIPTPE (125 aa)). Residue 47-50 (NKQD) coordinates GTP.

This sequence belongs to the TRAFAC class translation factor GTPase superfamily. Classic translation factor GTPase family. EF-Tu/EF-1A subfamily.

Its subcellular location is the plastid. It localises to the chloroplast. The enzyme catalyses GTP + H2O = GDP + phosphate + H(+). Functionally, GTP hydrolase that promotes the GTP-dependent binding of aminoacyl-tRNA to the A-site of ribosomes during protein biosynthesis. This chain is Elongation factor Tu, chloroplastic (tufA), found in Pandorina morum (Freshwater green alga).